Consider the following 451-residue polypeptide: MKYFGTDGVRGVANQELTPELAFKVGRFGGYVLTQHADSQNAHPQVLVARDTRISGELLENALVAGLLSVGIEVLRLGVITTPAVAYLVRTQGAAAGVMITASHNPVEYNGIKYFGNDGYKLSDEMEEEIEALLDAPTDDLPRPTTDGLGTVEDYSEGSQKYIQFLEQTIADDLDGLHIAVDSANGSTSGLVSRLYADLNLDFDTIATTPNGLNINDQVGSTHPEQLQKFVVDQGAAIGLAFDGDGDRCIAVDEEGHLVDGDKIMYICGKYMAEHGRLKKDTIVTTVMSNLGMYKAMEAHDLQSVKTKVGDRYVVEEMRKSGYNLGGEQSGHIVFLDFNTTGDGLLTSLQLLHILKVTGKKLSELAADVKTYPQKLVNVKVSDKQAALTNPQVQAMIATVEKEMNGDGRVLVRPSGTEPLLRVMAEAPTEETVAAYVGRIADVVRAEVGVE.

The active-site Phosphoserine intermediate is the Ser-103. Positions 103, 243, 245, and 247 each coordinate Mg(2+). Ser-103 is subject to Phosphoserine.

Belongs to the phosphohexose mutase family. Mg(2+) is required as a cofactor. In terms of processing, activated by phosphorylation.

The catalysed reaction is alpha-D-glucosamine 1-phosphate = D-glucosamine 6-phosphate. Its function is as follows. Catalyzes the conversion of glucosamine-6-phosphate to glucosamine-1-phosphate. The chain is Phosphoglucosamine mutase from Levilactobacillus brevis (strain ATCC 367 / BCRC 12310 / CIP 105137 / JCM 1170 / LMG 11437 / NCIMB 947 / NCTC 947) (Lactobacillus brevis).